Reading from the N-terminus, the 2521-residue chain is Piezo-type mechanosensitive ion channel component 1 (2521 aa).

Topologically, residues 1–12 (MEPHVLGAVLYW) are cytoplasmic. A helical membrane pass occupies residues 13–25 (LLLPCALLAACLL). At 26-28 (RFS) the chain is on the extracellular side. The chain crosses the membrane as a helical span at residues 29–44 (GLSLVYLLFLLLLPWF). Residues 45–58 (PGPTRCGLQGHTGR) are Cytoplasmic-facing. Residues 59 to 81 (LLRALLGLSLLFLVAHLALQICL) traverse the membrane as a helical segment. Over 82-121 (HIVPRLDQLLGPSCSRWETLSRHIGVTRLDLKDIPNAIRL) the chain is Extracellular. The chain crosses the membrane as a helical span at residues 122–138 (VAPDLGILVVSSVCLGI). The Cytoplasmic segment spans residues 139-194 (CGRLARNTRQSPHPRELDDDERDVDASPTAGLQEAATLAPTRRSRLAARFRVTAHW). The helical transmembrane segment at 195-214 (LLVAAGRVLAVTLLALAGIA) threads the bilayer. The Extracellular portion of the chain corresponds to 215–216 (HP). Residues 217–236 (SALSSVYLLLFLALCTWWAC) traverse the membrane as a helical segment. Residues 237 to 247 (HFPISTRGFSR) lie on the Cytoplasmic side of the membrane. Residues 248 to 268 (LCVAVGCFGAGHLICLYCYQM) traverse the membrane as a helical segment. Over 269–309 (PLAQALLPPAGIWARVLGLKDFVGPTNCSSPHALVLNTGLD) the chain is Extracellular. Asparagine 295 carries N-linked (GlcNAc...) asparagine glycosylation. The chain crosses the membrane as a helical span at residues 310-330 (WPVYASPGVLLLLCYATASLR). Residues 331–417 (KLRAYRPSGQ…EASPLHSLGH (87 aa)) lie on the Cytoplasmic side of the membrane. A helical transmembrane segment spans residues 418-438 (LIMDQSYVCALIAMMVWSITY). Over 439 to 440 (HS) the chain is Extracellular. A helical transmembrane segment spans residues 441–456 (WLTFVLLLWACLIWTV). The Cytoplasmic portion of the chain corresponds to 457–461 (RSRHQ). Residues 462 to 484 (LAMLCSPCILLYGMTLCCLRYVW) traverse the membrane as a helical segment. The Extracellular portion of the chain corresponds to 485–512 (AMDLRPELPTTLGPVSLRQLGLEHTRYP). The helical transmembrane segment at 513–530 (CLDLGAMLLYTLTFWLLL) threads the bilayer. Over 531 to 574 (RQFVKEKLLKWAESPAALTEVTVADTEPTRTQTLLQSLGELVKG) the chain is Cytoplasmic. Residues 575-595 (VYAKYWIYVCAGMFIVVSFAG) form a helical membrane-spanning segment. Arginine 596 is a topological domain (extracellular). A helical membrane pass occupies residues 597–617 (LVVYKIVYMFLFLLCLTLFQV). Over 618-627 (YYSLWRKLLK) the chain is Cytoplasmic. The chain crosses the membrane as a helical span at residues 628–649 (AFWWLVVAYTMLVLIAVYTFQF). At 650–679 (QDFPAYWRNLTGFTDEQLGDLGLEQFSVSE) the chain is on the extracellular side. Residues 680-696 (LFSSILVPGFFLLACIL) traverse the membrane as a helical segment. Topologically, residues 697-816 (QLHYFHRPFM…RRLLELHVFK (120 aa)) are cytoplasmic. A Phosphothreonine modification is found at threonine 734. Positions 738–769 (REEQQEHQQQQQEEEEEEEDSRDEGLGVATPH) are disordered. Residues 749-759 (QEEEEEEEDSR) are compositionally biased toward acidic residues. Serine 758 bears the Phosphoserine mark. A helical transmembrane segment spans residues 817-828 (LVALYTVWVALK). The Extracellular portion of the chain corresponds to 829–831 (EVS). The chain crosses the membrane as a helical span at residues 832-845 (VMNLLLVVLWAFAL). Residues 846-859 (PYPRFRPMASCLST) are Cytoplasmic-facing. The helical transmembrane segment at 860–874 (VWTCVIIVCKMLYQL) threads the bilayer. Over 875-926 (KVVNPQEYSSNCTEPFPNSTNLLPTEISQSLLYRGPVDPANWFGVRKGFPNL) the chain is Extracellular. The chain crosses the membrane as a helical span at residues 927 to 954 (GYIQNHLQVLLLLVFEAIVYRRQEHYRR). Over 955–994 (QHQLAPLPAQAVFASGTRQQLDQDLLGCLKYFINFFFYKF) the chain is Cytoplasmic. The chain crosses the membrane as a helical span at residues 995–1010 (GLEICFLMAVNVIGQR). Over 1011-1012 (MN) the chain is Extracellular. Residues 1013 to 1028 (FLVTLHGCWLVAILTR) form a helical membrane-spanning segment. Residues 1029 to 1041 (RHRQAIARLWPNY) lie on the Cytoplasmic side of the membrane. The helical transmembrane segment at 1042 to 1057 (CLFLALFLLYQYLLCL) threads the bilayer. Topologically, residues 1058–1096 (GMPPALCIDYPWRWSRAVPMNSALIKWLYLPDFFRAPNS) are extracellular. A helical transmembrane segment spans residues 1097–1118 (TNLISDFLLLLCASQQWQVFSA). Over 1119–1153 (ERTEEWQRMAGVNTDRLEPLRGEPNPVPNFIHCRS) the chain is Cytoplasmic. The helical transmembrane segment at 1154–1180 (YLDMLKVAVFRYLFWLVLVVVFVTGAT) threads the bilayer. Over 1181-1185 (RISIF) the chain is Extracellular. The helical transmembrane segment at 1186-1204 (GLGYLLACFYLLLFGTALL) threads the bilayer. At 1205 to 1217 (QRDTRARLVLWDC) the chain is on the cytoplasmic side. Residues 1218–1236 (LILYNVTVIISKNMLSLLA) traverse the membrane as a helical segment. Residues 1237–1285 (CVFVEQMQTGFCWVIQLFSLVCTVKGYYDPKEMMDRDQDCLLPVEEAGI) are Extracellular-facing. Residues 1286 to 1302 (IWDSVCFFFLLLQRRVF) form a helical membrane-spanning segment. The Cytoplasmic segment spans residues 1303–1656 (LSHYYLHVRA…ELLLDRRLRI (354 aa)). The stretch at 1339–1368 (HRRIEEKSLAQLKRQMERIRAKQEKHRQGR) forms a coiled coil. Disordered stretches follow at residues 1356-1402 (RIRA…RRQW), 1462-1498 (RQQE…EAAA), and 1576-1630 (TLPG…DPGE). The segment covering 1385–1398 (LEPGPDSPGGSSPP) has biased composition (low complexity). Phosphoserine occurs at positions 1391 and 1396. 2 positions are modified to phosphoserine: serine 1636 and serine 1646. Residues 1657-1700 (PELEEAELFAEGQGRALRLLRAVYQCVAAHSELLCYFIIILNHM) traverse the membrane as a helical segment. The Extracellular segment spans residues 1701–1704 (VTAS). Residues 1705–1720 (AGSLVLPVLVFLWAML) form a helical membrane-spanning segment. Residues 1721 to 1728 (SIPRPSKR) are Cytoplasmic-facing. The chain crosses the membrane as a helical span at residues 1729 to 1747 (FWMTAIVFTEIAVVVKYLF). The Extracellular portion of the chain corresponds to 1748–1779 (QFGFFPWNSHVVLRRYENKPYFPPRILGLEKT). Residues 1780–1801 (DGYIKYDLVQLMALFFHRSQLL) traverse the membrane as a helical segment. The Cytoplasmic portion of the chain corresponds to 1802 to 1960 (CYGLWDHEED…HTKYRAATDV (159 aa)). Positions 1811-1822 (DSPSKEHDKSGE) are enriched in basic and acidic residues. The disordered stretch occupies residues 1811–1921 (DSPSKEHDKS…RPSRSGGRVR (111 aa)). Threonine 1854 bears the Phosphothreonine mark. Residues 1859-1868 (VELRPRDTRR) are compositionally biased toward basic and acidic residues. Basic residues predominate over residues 1869 to 1878 (ISLRFRRRKK). Acidic residues predominate over residues 1890-1903 (EAEDREEEEGEEEK). The segment covering 1904–1913 (EAPTGREKRP) has biased composition (basic and acidic residues). A helical membrane pass occupies residues 1961–1980 (YALMFLADVVDFIIIIFGFW). The Extracellular portion of the chain corresponds to 1981 to 2000 (AFGKHSAATDITSSLSDDQV). Residues 2001–2017 (PEAFLVMLLIQFSTMVV) form a helical membrane-spanning segment. Residues 2018–2031 (DRALYLRKTVLGKL) lie on the Cytoplasmic side of the membrane. A helical membrane pass occupies residues 2032 to 2052 (AFQVALVLAIHLWMFFILPAV). Residues 2053 to 2060 (TERMFNQN) lie on the Extracellular side of the membrane. Residues 2061 to 2076 (VVAQLWYFVKCIYFAL) form a helical membrane-spanning segment. The Cytoplasmic portion of the chain corresponds to 2077-2176 (SAYQIRCGYP…KKKIVKYGMG (100 aa)). A helical transmembrane segment spans residues 2177-2197 (GLIILFLIAIIWFPLLFMSLV). Residues 2198-2431 (RSVVGVVNQP…IFSDKVSPPS (234 aa)) lie on the Extracellular side of the membrane. An N-linked (GlcNAc...) asparagine glycan is attached at asparagine 2294. Cysteine 2411 and cysteine 2415 are disulfide-bonded. A helical membrane pass occupies residues 2432-2452 (LGFLAGYGIMGLYVSIVLVIG). Residues 2453–2521 (KFVRGFFSEI…TMIKWTREKE (69 aa)) are Cytoplasmic-facing.

This sequence belongs to the PIEZO (TC 1.A.75) family. Homotrimer; the homotrimer forms a propeller-shaped Piezo channel with a cation-ion conducting pore. Heterotrimeric interaction may occur between PIEZO1 and PIEZO2. Interacts with PKD2. Interacts with STOML3. Interacts with TMC1, TMC2, PCDH15 and CIB2; the interaction may be part of the MET complex. Interacts with MDFIC (via C-terminus); the interaction prolongs Piezo channel inactivation. Interacts with MDFI (via C-terminus); the interaction prolongs Piezo channel inactivation. Expressed in numerous tissues. In normal brain, expressed exclusively in neurons, not in astrocytes. In Alzheimer disease brains, expressed in about half of the activated astrocytes located around classical senile plaques. In Parkinson disease substantia nigra, not detected in melanin-containing neurons nor in activated astrocytes. Expressed in erythrocytes (at protein level). Expressed in myoblasts (at protein level).

The protein resides in the endoplasmic reticulum membrane. It localises to the endoplasmic reticulum-Golgi intermediate compartment membrane. Its subcellular location is the cell membrane. The protein localises to the cell projection. It is found in the lamellipodium membrane. It catalyses the reaction K(+)(in) = K(+)(out). It carries out the reaction Na(+)(in) = Na(+)(out). The enzyme catalyses Ca(2+)(in) = Ca(2+)(out). The catalysed reaction is Mg(2+)(in) = Mg(2+)(out). With respect to regulation, regulated by auxillary subunits MDFIC and MDFI. Down-regulated by phosphatidylserines exposed on the cell surface. Divalent ions decrease the single-channel permeability of K(+). Pore-forming subunit of the mechanosensitive non-specific cation Piezo channel required for rapidly adapting mechanically activated (MA) currents and has a key role in sensing touch and tactile pain. Piezo channels are homotrimeric three-blade propeller-shaped structures that utilize a cap-motion and plug-and-latch mechanism to gate their ion-conducting pathways. Generates currents characterized by a linear current-voltage relationship that are sensitive to ruthenium red and gadolinium. Conductance to monovalent alkali ions is highest for K(+), intermediate for Na(+) and lowest for Li(+). Divalent ions except for Mn(2+) permeate the channel but more slowly than the monovalent ions and they also reduce K(+) currents. Plays a key role in epithelial cell adhesion by maintaining integrin activation through R-Ras recruitment to the ER, most probably in its activated state, and subsequent stimulation of calpain signaling. In inner ear hair cells, PIEZO1/2 subunits may constitute part of the mechanotransducer (MET) non-selective cation channel complex where they may act as pore-forming ion-conducting component in the complex. In the kidney, may contribute to the detection of intraluminal pressure changes and to urine flow sensing. Acts as a shear-stress sensor that promotes endothelial cell organization and alignment in the direction of blood flow through calpain activation. Plays a key role in blood vessel formation and vascular structure in both development and adult physiology. Acts as a sensor of phosphatidylserine (PS) flipping at the plasma membrane and governs morphogenesis of muscle cells. In myoblasts, flippase-mediated PS enrichment at the inner leaflet of plasma membrane triggers channel activation and Ca2+ influx followed by Rho GTPases signal transduction, leading to assembly of cortical actomyosin fibers and myotube formation. The polypeptide is Piezo-type mechanosensitive ion channel component 1 (Homo sapiens (Human)).